Consider the following 206-residue polypeptide: Protein GrpE (206 aa).

The segment covering 1-17 has biased composition (basic and acidic residues); it reads MSNESIKAEQDLIHEGV. Positions 1–20 are disordered; sequence MSNESIKAEQDLIHEGVESE.

It belongs to the GrpE family. In terms of assembly, homodimer.

The protein localises to the cytoplasm. Participates actively in the response to hyperosmotic and heat shock by preventing the aggregation of stress-denatured proteins, in association with DnaK and GrpE. It is the nucleotide exchange factor for DnaK and may function as a thermosensor. Unfolded proteins bind initially to DnaJ; upon interaction with the DnaJ-bound protein, DnaK hydrolyzes its bound ATP, resulting in the formation of a stable complex. GrpE releases ADP from DnaK; ATP binding to DnaK triggers the release of the substrate protein, thus completing the reaction cycle. Several rounds of ATP-dependent interactions between DnaJ, DnaK and GrpE are required for fully efficient folding. The chain is Protein GrpE from Shewanella oneidensis (strain ATCC 700550 / JCM 31522 / CIP 106686 / LMG 19005 / NCIMB 14063 / MR-1).